A 452-amino-acid chain; its full sequence is Protein CLT3, chloroplastic (452 aa).

A chloroplast-targeting transit peptide spans 1-34 (MATTSRRFTTGLFASITSVKSHSANRPQSISLIR). Transmembrane regions (helical) follow at residues 105–125 (AEIV…RVMY), 137–157 (FFLA…ILYF), 175–195 (PFLI…AAAA), 202–222 (TTVL…IFLG), 230–250 (ILGC…GSGA), 258–278 (GVLW…GTVL), 307–327 (FQAI…GIPF), 353–373 (GAPF…IALL), 389–409 (TVSV…LGVA), and 412–432 (LPKG…LYSW).

The protein belongs to the CRT-like transporter family.

It is found in the plastid. The protein resides in the chloroplast membrane. Involved in thiol transport from the plastid to the cytosol. Transports probably both glutathione (GSH) and its precursor, gamma-glutamylcysteine (gamma-EC). Exhibits some functional redundancy with CLT1 in maintaining the root GSH pool. The protein is Protein CLT3, chloroplastic of Arabidopsis thaliana (Mouse-ear cress).